The sequence spans 356 residues: UDP-N-acetylglucosamine--N-acetylmuramyl-(pentapeptide) pyrophosphoryl-undecaprenol N-acetylglucosamine transferase (356 aa).

Residues 12–14 (TGG), N124, R163, S188, I242, and Q287 contribute to the UDP-N-acetyl-alpha-D-glucosamine site.

This sequence belongs to the glycosyltransferase 28 family. MurG subfamily.

It localises to the cell inner membrane. It catalyses the reaction di-trans,octa-cis-undecaprenyl diphospho-N-acetyl-alpha-D-muramoyl-L-alanyl-D-glutamyl-meso-2,6-diaminopimeloyl-D-alanyl-D-alanine + UDP-N-acetyl-alpha-D-glucosamine = di-trans,octa-cis-undecaprenyl diphospho-[N-acetyl-alpha-D-glucosaminyl-(1-&gt;4)]-N-acetyl-alpha-D-muramoyl-L-alanyl-D-glutamyl-meso-2,6-diaminopimeloyl-D-alanyl-D-alanine + UDP + H(+). It functions in the pathway cell wall biogenesis; peptidoglycan biosynthesis. Cell wall formation. Catalyzes the transfer of a GlcNAc subunit on undecaprenyl-pyrophosphoryl-MurNAc-pentapeptide (lipid intermediate I) to form undecaprenyl-pyrophosphoryl-MurNAc-(pentapeptide)GlcNAc (lipid intermediate II). This is UDP-N-acetylglucosamine--N-acetylmuramyl-(pentapeptide) pyrophosphoryl-undecaprenol N-acetylglucosamine transferase from Pseudomonas fluorescens (strain Pf0-1).